The chain runs to 229 residues: Flagellar L-ring protein (229 aa).

A signal peptide spans 1-23 (MNPLTRVALAVAAFAALVLALSA). Residue Cys24 is the site of N-palmitoyl cysteine attachment. Residue Cys24 is the site of S-diacylglycerol cysteine attachment.

This sequence belongs to the FlgH family. As to quaternary structure, the basal body constitutes a major portion of the flagellar organelle and consists of four rings (L,P,S, and M) mounted on a central rod.

It is found in the cell outer membrane. The protein resides in the bacterial flagellum basal body. Its function is as follows. Assembles around the rod to form the L-ring and probably protects the motor/basal body from shearing forces during rotation. The chain is Flagellar L-ring protein from Anaeromyxobacter dehalogenans (strain 2CP-1 / ATCC BAA-258).